Consider the following 530-residue polypeptide: Probable NADH-specific resorcinol 4-hydroxylase (530 aa).

The enzyme catalyses resorcinol + NADH + O2 + H(+) = benzene-1,2,4-triol + NAD(+) + H2O. Single-component hydroxylase that is part of the gamma-resorcylate (GRA) degradation pathway. GRA is initially converted by GRA decarboxylase to resorcinol, which is hydroxylated by resorcinol 4-hydroxylase. This chain is Probable NADH-specific resorcinol 4-hydroxylase (tsdB), found in Rhodococcus jostii (strain RHA1).